We begin with the raw amino-acid sequence, 279 residues long: tRNA pseudouridine synthase A (279 aa).

The active-site Nucleophile is aspartate 54. Tyrosine 112 is a substrate binding site.

Belongs to the tRNA pseudouridine synthase TruA family. Homodimer.

The catalysed reaction is uridine(38/39/40) in tRNA = pseudouridine(38/39/40) in tRNA. Its function is as follows. Formation of pseudouridine at positions 38, 39 and 40 in the anticodon stem and loop of transfer RNAs. In Cutibacterium acnes (strain DSM 16379 / KPA171202) (Propionibacterium acnes), this protein is tRNA pseudouridine synthase A.